The primary structure comprises 152 residues: Large ribosomal subunit protein bL9 (152 aa).

This sequence belongs to the bacterial ribosomal protein bL9 family.

Its function is as follows. Binds to the 23S rRNA. This Coxiella burnetii (strain Dugway 5J108-111) protein is Large ribosomal subunit protein bL9.